We begin with the raw amino-acid sequence, 386 residues long: 2,3,4,5-tetrahydropyridine-2,6-dicarboxylate N-succinyltransferase (386 aa).

The Acyl-anhydride intermediate role is filled by Glu257. Succinyl-CoA is bound by residues Arg259, Gly274, Ser277, Ala300, 315 to 316, Gly323, Lys349, and 362 to 365; these read DA and RQDS.

This sequence belongs to the type 2 tetrahydrodipicolinate N-succinyltransferase family. As to quaternary structure, homotrimer.

Its subcellular location is the cytoplasm. The catalysed reaction is (S)-2,3,4,5-tetrahydrodipicolinate + succinyl-CoA + H2O = (S)-2-succinylamino-6-oxoheptanedioate + CoA. Its pathway is amino-acid biosynthesis; L-lysine biosynthesis via DAP pathway; LL-2,6-diaminopimelate from (S)-tetrahydrodipicolinate (succinylase route): step 1/3. Its function is as follows. Catalyzes the conversion of the cyclic tetrahydrodipicolinate (THDP) into the acyclic N-succinyl-L-2-amino-6-oxopimelate using succinyl-CoA. In Campylobacter jejuni subsp. jejuni serotype O:2 (strain ATCC 700819 / NCTC 11168), this protein is 2,3,4,5-tetrahydropyridine-2,6-dicarboxylate N-succinyltransferase.